Here is a 96-residue protein sequence, read N- to C-terminus: Co-chaperonin GroES 2 (96 aa).

Belongs to the GroES chaperonin family. Heptamer of 7 subunits arranged in a ring. Interacts with the chaperonin GroEL.

The protein resides in the cytoplasm. Together with the chaperonin GroEL, plays an essential role in assisting protein folding. The GroEL-GroES system forms a nano-cage that allows encapsulation of the non-native substrate proteins and provides a physical environment optimized to promote and accelerate protein folding. GroES binds to the apical surface of the GroEL ring, thereby capping the opening of the GroEL channel. In Vibrio vulnificus (strain CMCP6), this protein is Co-chaperonin GroES 2.